A 1089-amino-acid chain; its full sequence is PALM2-AKAP2 fusion protein (1089 aa).

The stretch at 70–107 forms a coiled coil; that stretch reads SEEDEFKVKQLEDNIQRLEQEIQALESEESQISAKEQI. Disordered regions lie at residues 165-194, 210-231, and 289-362; these read SEDA…SPDH, PGVT…PSHN, and PAHS…SRDG. Basic and acidic residues predominate over residues 173 to 183; that stretch reads SKQDNCGDSRL. Phosphoserine is present on residues Arg315 and Ser318. The span at 317–328 shows a compositional bias: basic and acidic residues; the sequence is PSDRMAEGERAN. The segment covering 329–347 has biased composition (polar residues); sequence GHSTDQPQDLLGNSLQAPA. Phosphoserine is present on Ser348. Residues 348–357 are compositionally biased toward low complexity; it reads SPSSSTSSHC. Lys370 participates in a covalent cross-link: Glycyl lysine isopeptide (Lys-Gly) (interchain with G-Cter in SUMO1); alternate. Lys370 participates in a covalent cross-link: Glycyl lysine isopeptide (Lys-Gly) (interchain with G-Cter in SUMO2); alternate. Residues 429-517 form a disordered region; that stretch reads KNPGIAAKWW…LSTSQPCTAP (89 aa). A compositionally biased stretch (basic and acidic residues) spans 455 to 470; sequence LESHRKYKERKEKRAQ. Residues 471-508 are compositionally biased toward low complexity; the sequence is QEQLQLQQQQQQQLQQQQLQQQQLQQQQLQQQLQQQQL. At Ser553 the chain carries Phosphoserine. Residues 592 to 644 are disordered; that stretch reads TVGGTLEDGGTQAAKEQKAPCVSESQSAGAGPANAATQGKEGPYSEPSKRGPL. Ser678, Ser682, and Ser734 each carry phosphoserine. The segment covering 712 to 749 has biased composition (polar residues); that stretch reads FSMDNISDSGASNETPSALQENSLADFSLPQTPQTDNP. 3 disordered regions span residues 712–783, 800–899, and 915–934; these read FSMD…DPLE, EQVD…YFSK, and TQES…KQRT. A Phosphothreonine modification is found at Thr743. Residues 782 to 795 form a PKA-RII subunit binding domain region; the sequence is LEYQAGLLVQNAIQ. Over residues 801 to 814 the composition is skewed to basic and acidic residues; sequence QVDKAEAHTSKEGS. A Phosphoserine modification is found at Ser847. Residues 850 to 871 are compositionally biased toward basic and acidic residues; that stretch reads QEKRDILPKNLPAEDRALREKG. Positions 928–958 form a coiled coil; that stretch reads RSRKQRTLSMIEEEIRAAQEREEELKRQRQV. A phosphoserine mark is found at Ser936, Ser964, Ser995, and Ser1002. A disordered region spans residues 946-1021; the sequence is QEREEELKRQ…AAGTQRPKNL (76 aa).

As to expression, highly expressed in lung and weakly in thymus and cerebellum. Little or no expression in liver, heart and cerebral cortex. All isoforms are expressed in lung, but KL2A and KL2B isoforms are the principal isoforms in cerebellum.

It localises to the apical cell membrane. Its function is as follows. Binds to regulatory subunit (RII) of protein kinase A. May be involved in establishing polarity in signaling systems or in integrating PKA-RII isoforms with downstream effectors to capture, amplify and focus diffuse, trans-cellular signals carried by cAMP. Binds tp and modulates the structure of the actin cytoskeleton. The protein is PALM2-AKAP2 fusion protein of Mus musculus (Mouse).